The sequence spans 64 residues: Large ribosomal subunit protein bL33 (64 aa).

The protein belongs to the bacterial ribosomal protein bL33 family.

In Synechococcus elongatus (strain ATCC 33912 / PCC 7942 / FACHB-805) (Anacystis nidulans R2), this protein is Large ribosomal subunit protein bL33.